The sequence spans 304 residues: Oxygen-dependent coproporphyrinogen-III oxidase (304 aa).

Serine 94 serves as a coordination point for substrate. 2 residues coordinate a divalent metal cation: histidine 98 and histidine 108. The Proton donor role is filled by histidine 108. 110 to 112 (NVR) provides a ligand contact to substrate. Residues histidine 147 and histidine 177 each contribute to the a divalent metal cation site. Positions 242–277 (YVEFNLVWDRGTLFGLQSGGRTESVLMSMPPLARWQ) are important for dimerization. Residue 260–262 (GGR) coordinates substrate.

The protein belongs to the aerobic coproporphyrinogen-III oxidase family. In terms of assembly, homodimer. It depends on a divalent metal cation as a cofactor.

It localises to the cytoplasm. The catalysed reaction is coproporphyrinogen III + O2 + 2 H(+) = protoporphyrinogen IX + 2 CO2 + 2 H2O. It participates in porphyrin-containing compound metabolism; protoporphyrin-IX biosynthesis; protoporphyrinogen-IX from coproporphyrinogen-III (O2 route): step 1/1. Involved in the heme biosynthesis. Catalyzes the aerobic oxidative decarboxylation of propionate groups of rings A and B of coproporphyrinogen-III to yield the vinyl groups in protoporphyrinogen-IX. The protein is Oxygen-dependent coproporphyrinogen-III oxidase of Sodalis glossinidius (strain morsitans).